The chain runs to 405 residues: Probable tRNA sulfurtransferase (405 aa).

Residues 60-165 enclose the THUMP domain; sequence ETIDQRLKLV…QDAIYISNQL (106 aa). ATP contacts are provided by residues 183–184, 208–209, R265, G287, and Q296; these read ML and HF.

It belongs to the ThiI family.

The protein resides in the cytoplasm. It carries out the reaction [ThiI sulfur-carrier protein]-S-sulfanyl-L-cysteine + a uridine in tRNA + 2 reduced [2Fe-2S]-[ferredoxin] + ATP + H(+) = [ThiI sulfur-carrier protein]-L-cysteine + a 4-thiouridine in tRNA + 2 oxidized [2Fe-2S]-[ferredoxin] + AMP + diphosphate. The catalysed reaction is [ThiS sulfur-carrier protein]-C-terminal Gly-Gly-AMP + S-sulfanyl-L-cysteinyl-[cysteine desulfurase] + AH2 = [ThiS sulfur-carrier protein]-C-terminal-Gly-aminoethanethioate + L-cysteinyl-[cysteine desulfurase] + A + AMP + 2 H(+). Its pathway is cofactor biosynthesis; thiamine diphosphate biosynthesis. In terms of biological role, catalyzes the ATP-dependent transfer of a sulfur to tRNA to produce 4-thiouridine in position 8 of tRNAs, which functions as a near-UV photosensor. Also catalyzes the transfer of sulfur to the sulfur carrier protein ThiS, forming ThiS-thiocarboxylate. This is a step in the synthesis of thiazole, in the thiamine biosynthesis pathway. The sulfur is donated as persulfide by IscS. The polypeptide is Probable tRNA sulfurtransferase (Lactobacillus johnsonii (strain CNCM I-12250 / La1 / NCC 533)).